We begin with the raw amino-acid sequence, 320 residues long: Olfactory receptor 12D1 (320 aa).

Residues 1-23 are Extracellular-facing; sequence MLNTTSVTEFLLLGVTDIQELQP. Asn3 carries N-linked (GlcNAc...) asparagine glycosylation. Residues 24–44 traverse the membrane as a helical segment; that stretch reads FLFVVFLTIYFISVAGNGAIL. Over 45 to 55 the chain is Cytoplasmic; the sequence is MIVISDPRLHS. A helical membrane pass occupies residues 56–76; that stretch reads PMYFFLGNLSCLDICYSSVTL. Over 77–97 the chain is Extracellular; sequence PKMLQNFLSAHKAISFLGCIS. The cysteines at positions 95 and 177 are disulfide-linked. Residues 98–118 traverse the membrane as a helical segment; that stretch reads QLHFFHFLGSTEAMLLAVMAF. Over 119-141 the chain is Cytoplasmic; sequence DRFVAICKPLRYTVIMNPQLCTQ. Residues 142-162 form a helical membrane-spanning segment; the sequence is MAITIWMIGFFHALLHSLMTS. The Extracellular segment spans residues 163-203; that stretch reads RLNFCGSNRIYHFFCDVKPLLKLACGNTELNQWLLSTVTGT. Residues 204–224 form a helical membrane-spanning segment; the sequence is IAMGPFFLTLLSYFYIITHLF. The Cytoplasmic portion of the chain corresponds to 225 to 238; sequence FKTHSFSMLRKALS. A helical transmembrane segment spans residues 239-259; it reads TCASHFMVVILLYAPVLFTYI. The Extracellular segment spans residues 260–270; it reads HHASGTSMDQD. Residues 271-291 traverse the membrane as a helical segment; the sequence is RITAIMYTVVTPVLNPLIYTL. The Cytoplasmic portion of the chain corresponds to 292-320; the sequence is RNKEVKGAFNRAMKRWLWPKEILKNSSEA.

It belongs to the G-protein coupled receptor 1 family.

Its subcellular location is the cell membrane. Odorant receptor. This chain is Olfactory receptor 12D1 (OR12D1), found in Homo sapiens (Human).